Here is a 335-residue protein sequence, read N- to C-terminus: N-acetyl-gamma-glutamyl-phosphate reductase (335 aa).

The active site involves Cys-156.

It belongs to the NAGSA dehydrogenase family. Type 1 subfamily.

Its subcellular location is the cytoplasm. It catalyses the reaction N-acetyl-L-glutamate 5-semialdehyde + phosphate + NADP(+) = N-acetyl-L-glutamyl 5-phosphate + NADPH + H(+). It participates in amino-acid biosynthesis; L-arginine biosynthesis; N(2)-acetyl-L-ornithine from L-glutamate: step 3/4. Functionally, catalyzes the NADPH-dependent reduction of N-acetyl-5-glutamyl phosphate to yield N-acetyl-L-glutamate 5-semialdehyde. This is N-acetyl-gamma-glutamyl-phosphate reductase from Aeromonas hydrophila subsp. hydrophila (strain ATCC 7966 / DSM 30187 / BCRC 13018 / CCUG 14551 / JCM 1027 / KCTC 2358 / NCIMB 9240 / NCTC 8049).